The chain runs to 115 residues: Large ribosomal subunit protein bL20 (115 aa).

The protein belongs to the bacterial ribosomal protein bL20 family.

Binds directly to 23S ribosomal RNA and is necessary for the in vitro assembly process of the 50S ribosomal subunit. It is not involved in the protein synthesizing functions of that subunit. The protein is Large ribosomal subunit protein bL20 of Prochlorococcus marinus (strain MIT 9312).